We begin with the raw amino-acid sequence, 456 residues long: MTTSIAGLESLGRVHFIGIGGVGMSAVARIMVSRGVPVSGSDVKDLPVMRDLSSAGARIAVGYDAGNLGDAQTIVAGSAIRADNPELVAAREAGLPVLHRSEALAATMAGHRVVTVAGTHGKSTTTSMVAVLLKEAGLDPSFAIGANVPALGVNAAHGSSDIFVAEADESDGSFLNYRPLIAVVTNVEADHLDHYGTPEAVFASFDDFAALLPAQGVLLACSDDAGARALADRTASKGTTRVLTYGTSDDADIRLHDGGPGDVSVALDGGVHKLELQVPGRHNALNAAAAFAVAVELGVEPGAAAAALGHFTGASRRFELKGRGRGVRVYDDYAHHPTEVRAALSAARSVAGDNKVHVLFQPHLFSRTREFSQEFAAALDLADTALVLDIYPAREDPIPGVTSTLITDHLVNGRLVSADEAVDAVAAVASEGDVVLTVGAGDVTAYGPVIVEALGG.

118–124 contacts ATP; it reads GTHGKST.

Belongs to the MurCDEF family.

It localises to the cytoplasm. It catalyses the reaction UDP-N-acetyl-alpha-D-muramate + L-alanine + ATP = UDP-N-acetyl-alpha-D-muramoyl-L-alanine + ADP + phosphate + H(+). It functions in the pathway cell wall biogenesis; peptidoglycan biosynthesis. Functionally, cell wall formation. This chain is UDP-N-acetylmuramate--L-alanine ligase, found in Paenarthrobacter aurescens (strain TC1).